Reading from the N-terminus, the 328-residue chain is 4-hydroxythreonine-4-phosphate dehydrogenase (328 aa).

T125 contributes to the substrate binding site. A divalent metal cation contacts are provided by H160, H203, and H269. The substrate site is built by K277, N286, and R295.

It belongs to the PdxA family. As to quaternary structure, homodimer. The cofactor is a divalent metal cation.

The protein resides in the cytoplasm. It catalyses the reaction 4-(phosphooxy)-L-threonine + NAD(+) = 3-amino-2-oxopropyl phosphate + CO2 + NADH. Its pathway is cofactor biosynthesis; pyridoxine 5'-phosphate biosynthesis; pyridoxine 5'-phosphate from D-erythrose 4-phosphate: step 4/5. In terms of biological role, catalyzes the NAD(P)-dependent oxidation of 4-(phosphooxy)-L-threonine (HTP) into 2-amino-3-oxo-4-(phosphooxy)butyric acid which spontaneously decarboxylates to form 3-amino-2-oxopropyl phosphate (AHAP). The sequence is that of 4-hydroxythreonine-4-phosphate dehydrogenase from Synechococcus sp. (strain RCC307).